The primary structure comprises 344 residues: Secreted LysM effector LysM2 (344 aa).

The signal sequence occupies residues 1–24; that stretch reads MMAPKSLQTGLLILLLAKLKLAWG. Residues 36 to 80 form the LysM 1 domain; the sequence is YEAAASSGDTCTSFAAEWGLTEETFASLNPSAACPSLVAGQNYCM. The span at 88–134 shows a compositional bias: low complexity; that stretch reads STTSSSSSTTSSSTTSSSTTSSSTTSSSTTTSSFTTTTASETTSTAA. The tract at residues 88–141 is disordered; the sequence is STTSSSSSTTSSSTTSSSTTSSSTTSSSTTTSSFTTTTASETTSTAANGVTTPM. LysM domains follow at residues 153-199, 216-262, and 296-342; these read KFDL…YVCV and KFWL…YICV.

The protein belongs to the secreted LysM effector family.

Might have a role in sequestration of chitin oligosaccharides (breakdown products of fungal cell walls that are released during invasion and act as triggers of host immunity) to dampen host defense. This Penicillium expansum (Blue mold rot fungus) protein is Secreted LysM effector LysM2.